A 285-amino-acid chain; its full sequence is Acetyl-coenzyme A carboxylase carboxyl transferase subunit beta (285 aa).

Residues 29 to 285 (IMTKCPNCKK…ILKIHQEVSN (257 aa)) form the CoA carboxyltransferase N-terminal domain. Cys33, Cys36, Cys52, and Cys55 together coordinate Zn(2+). Residues 33–55 (CPNCKKIMYTKELNENLNVCFNC) form a C4-type zinc finger.

Belongs to the AccD/PCCB family. Acetyl-CoA carboxylase is a heterohexamer composed of biotin carboxyl carrier protein (AccB), biotin carboxylase (AccC) and two subunits each of ACCase subunit alpha (AccA) and ACCase subunit beta (AccD). Zn(2+) is required as a cofactor.

The protein resides in the cytoplasm. The catalysed reaction is N(6)-carboxybiotinyl-L-lysyl-[protein] + acetyl-CoA = N(6)-biotinyl-L-lysyl-[protein] + malonyl-CoA. It participates in lipid metabolism; malonyl-CoA biosynthesis; malonyl-CoA from acetyl-CoA: step 1/1. Its function is as follows. Component of the acetyl coenzyme A carboxylase (ACC) complex. Biotin carboxylase (BC) catalyzes the carboxylation of biotin on its carrier protein (BCCP) and then the CO(2) group is transferred by the transcarboxylase to acetyl-CoA to form malonyl-CoA. This is Acetyl-coenzyme A carboxylase carboxyl transferase subunit beta from Staphylococcus epidermidis (strain ATCC 35984 / DSM 28319 / BCRC 17069 / CCUG 31568 / BM 3577 / RP62A).